A 132-amino-acid polypeptide reads, in one-letter code: Ribosome-binding factor A (132 aa).

It belongs to the RbfA family. Monomer. Binds 30S ribosomal subunits, but not 50S ribosomal subunits or 70S ribosomes.

It localises to the cytoplasm. Its function is as follows. One of several proteins that assist in the late maturation steps of the functional core of the 30S ribosomal subunit. Associates with free 30S ribosomal subunits (but not with 30S subunits that are part of 70S ribosomes or polysomes). Required for efficient processing of 16S rRNA. May interact with the 5'-terminal helix region of 16S rRNA. The chain is Ribosome-binding factor A from Burkholderia multivorans (strain ATCC 17616 / 249).